The sequence spans 388 residues: Ectopic P granules protein 6 (388 aa).

The span at 1-25 shows a compositional bias: basic and acidic residues; that stretch reads MSKKEETIFFRIEKENRPESSKKEE. The tract at residues 1–33 is disordered; sequence MSKKEETIFFRIEKENRPESSKKEEDENSTEEM. One copy of the WD 1 repeat lies at 217 to 257; sequence AHLTDIAQVALNCQGTLVATGSTKGTVIRVFDARTKGPLYE. Positions 258-261 match the LRRG motif motif; sequence LRRG. A WD 2 repeat occupies 262–301; sequence TVQAHLQCMAFSPCSSYLAVASDKGTLHMFGIRDAEPQKK. Residues 265–328 form a required for atg-2 binding region; the sequence is AHLQCMAFSP…LDRPVMAIGF (64 aa).

Belongs to the WD repeat PROPPIN family. As to quaternary structure, interacts with atg-2; the interaction is direct. Widely expressed in tissues including pharyngeal, muscle and neuronal tissues.

The protein resides in the cytoplasm. It is found in the preautophagosomal structure membrane. Component of the epg-6/atg-2 complex, which is involved in the generation of autophagosomes from omegasomes and in the distribution of atg-9 and atg-13 during the autophagy-mediated degradation of protein aggregates. Binds to phosphatidylinositols on preautophagosomes, which are early autophagic structures, to promote autophagosome formation. In particular, binds with high affinity to phosphatidylinositols including phosphatidylinositol 3-phosphate (PtdIns(3)P) and phosphatidylinositol 5-phosphate (PtdIns(5)P), but more weakly to phosphatidylinositol 4-phosphate (PtdIns(4)P) and phosphatidylinositol 3,5-bisphosphate (PtdIns(3,5)P2). Involved in autophagy-mediated degradation of ribosomal RNA and ribosomal proteins in lysosomes, which is essential for maintaining nucleotide homeostasis. The chain is Ectopic P granules protein 6 from Caenorhabditis elegans.